The sequence spans 841 residues: MAP7 domain-containing protein 1 (841 aa).

2 disordered regions span residues 1–151 (MESG…ERAK) and 184–208 (EQRL…EKNK). Pro residues predominate over residues 22-52 (PPEPRPSPEGDPSPPPPPMSALVPDTPPDTP). Residues T47 and T51 each carry the phosphothreonine modification. Residues S70, S86, and S93 each carry the phosphoserine modification. Residue T97 is modified to Phosphothreonine. Phosphoserine occurs at positions 113 and 116. A Phosphothreonine modification is found at T118. Phosphoserine occurs at positions 123 and 125. Residues 128-222 (TKQEVKKAGE…AAIQRSVKKT (95 aa)) adopt a coiled-coil conformation. Residues 130–151 (QEVKKAGERHKLAKERREERAK) show a composition bias toward basic and acidic residues. 5 positions are modified to phosphoserine: S254, S273, S313, S366, and S399. Residues 316 to 813 (TLPRNGRDQG…PSGDKSLSRT (498 aa)) form a disordered region. Over residues 365 to 377 (ASASPLTPCSVTR) the composition is skewed to polar residues. The span at 405-435 (RRPEASPVQKKEKKDKERENEKEKSALARER) shows a compositional bias: basic and acidic residues. The stretch at 412-441 (VQKKEKKDKERENEKEKSALARERSLKKRQ) forms a coiled coil. S442, S446, S452, S454, and S460 each carry phosphoserine. Over residues 460-473 (SPKSKARPSSPSTS) the composition is skewed to low complexity. K462 is covalently cross-linked (Glycyl lysine isopeptide (Lys-Gly) (interchain with G-Cter in SUMO2)). A phosphoserine mark is found at S479 and S496. Residues 479–497 (SPCPSPGPGHTLPPKPPSP) show a composition bias toward pro residues. Over residues 523–539 (PEDKSQSKRRASNEKES) the composition is skewed to basic and acidic residues. S544, S548, and S552 each carry phosphoserine. A compositionally biased stretch (pro residues) spans 544–561 (SPAPSPAPSPTPAPPQKE). T554 carries the phosphothreonine modification. Low complexity predominate over residues 562-576 (QPPAETPTDAAVLTS). Over residues 577–586 (PPAPAPPVTP) the composition is skewed to pro residues. Residues 593–721 (TTDREEATRL…LEEIMKRTRK (129 aa)) adopt a coiled-coil conformation. Residues 594-735 (TDREEATRLL…ETKQKQDSKE (142 aa)) are compositionally biased toward basic and acidic residues. 2 positions are modified to phosphoserine: S742 and S753. A phosphothreonine mark is found at T813 and T816. S834 is subject to Phosphoserine.

Belongs to the MAP7 family.

It is found in the cytoplasm. The protein localises to the cytoskeleton. It localises to the spindle. The protein resides in the microtubule organizing center. Its subcellular location is the centrosome. It is found in the midbody. Microtubule-stabilizing protein involved in the control of cell motility and neurite outgrowth. Facilitate microtubule stabilization through the maintenance of acetylated stable microtubules. This chain is MAP7 domain-containing protein 1 (MAP7D1), found in Homo sapiens (Human).